The following is a 354-amino-acid chain: MAVDFSMRQLLEAGAHFGHQSHRWNPKMQPYIFGTRNNIHIIDLAQTVPALHAALQAVSDTVARGGRVLFVGTKRQAADAIAEAAKRSAQYYVNSRWLGGMLTNWKTISGSIQRLRKVDETLEGGAVGLTKKERLMLTREKEKLEKALGGIKDMGGVPDLLFVIDTNKEQLAIKEAQRLGIPVAAIVDTNCNPDGISYIVPANDDAGRAIALYCDLIARAAIEGIGRGQGALGIDVGASEEPTAEELPANDDVVASVASDAIAPADVAALAESTEHFEQLAAPRGAPDDLTKLTGVGPQLVQKLNDAGVWHYWQIAAMQADDVAKLDADLKLNGRIARDGWVEQSRAFVEAAAA.

Belongs to the universal ribosomal protein uS2 family.

The chain is Small ribosomal subunit protein uS2 from Methylorubrum populi (strain ATCC BAA-705 / NCIMB 13946 / BJ001) (Methylobacterium populi).